The chain runs to 599 residues: Elongation factor 4 (599 aa).

In terms of domain architecture, tr-type G spans 2 to 184; that stretch reads KNIRNFSIIA…RLVRDIPPPE (183 aa). GTP-binding positions include 14 to 19 and 131 to 134; these read DHGKST and NKID.

The protein belongs to the TRAFAC class translation factor GTPase superfamily. Classic translation factor GTPase family. LepA subfamily.

The protein resides in the cell inner membrane. It catalyses the reaction GTP + H2O = GDP + phosphate + H(+). Functionally, required for accurate and efficient protein synthesis under certain stress conditions. May act as a fidelity factor of the translation reaction, by catalyzing a one-codon backward translocation of tRNAs on improperly translocated ribosomes. Back-translocation proceeds from a post-translocation (POST) complex to a pre-translocation (PRE) complex, thus giving elongation factor G a second chance to translocate the tRNAs correctly. Binds to ribosomes in a GTP-dependent manner. The chain is Elongation factor 4 from Klebsiella pneumoniae (strain 342).